Here is a 145-residue protein sequence, read N- to C-terminus: Ribosome-binding factor A (145 aa).

The segment covering 122–132 (KVQRDLESAPR) has biased composition (basic and acidic residues). The tract at residues 122–145 (KVQRDLESAPREDDEGEPASSSRD) is disordered.

This sequence belongs to the RbfA family. In terms of assembly, monomer. Binds 30S ribosomal subunits, but not 50S ribosomal subunits or 70S ribosomes.

The protein localises to the cytoplasm. Functionally, one of several proteins that assist in the late maturation steps of the functional core of the 30S ribosomal subunit. Associates with free 30S ribosomal subunits (but not with 30S subunits that are part of 70S ribosomes or polysomes). Required for efficient processing of 16S rRNA. May interact with the 5'-terminal helix region of 16S rRNA. This Methylorubrum extorquens (strain CM4 / NCIMB 13688) (Methylobacterium extorquens) protein is Ribosome-binding factor A.